Here is a 180-residue protein sequence, read N- to C-terminus: Inosine/xanthosine triphosphatase (180 aa).

Position 8 to 13 (8 to 13) interacts with substrate; sequence TTNPAK. Mg(2+)-binding residues include D38 and E68. 68–69 contributes to the substrate binding site; sequence EA.

This sequence belongs to the YjjX NTPase family. Homodimer. Requires Mg(2+) as cofactor. Mn(2+) is required as a cofactor.

The enzyme catalyses XTP + H2O = XDP + phosphate + H(+). The catalysed reaction is ITP + H2O = IDP + phosphate + H(+). Its function is as follows. Phosphatase that hydrolyzes non-canonical purine nucleotides such as XTP and ITP to their respective diphosphate derivatives. Probably excludes non-canonical purines from DNA/RNA precursor pool, thus preventing their incorporation into DNA/RNA and avoiding chromosomal lesions. The chain is Inosine/xanthosine triphosphatase from Yersinia pestis bv. Antiqua (strain Antiqua).